Here is a 343-residue protein sequence, read N- to C-terminus: MKNLLDLSYDELVSEITSLGLERYRADQILDWVFDKKVNNFDEMTNLSKQHRALLKEHFTIPFLKLLEKRVSKIDGTTKFLWELEDGNTIESVMIFHPGRITACISTQVGCPVGCTFCATGMSGFVRNLTTGEIVSQILSMEKEEGKKIGNVVYMGMGEPLLNYENTIKSIRILNHKKMGNIGIRRITISTVGIPEKIIQLADEGLDVKLALSLHAPTNFKRDQLVPLNRKYSVEEILNAIKVYQMKTGKRVTIEYVLIRGVNDEISDAKKLAEILKGLKVFVNLIPVNPTVAGLSKPSRQRILAFKRILLENGIEAEIRQEKGSDIEAACGQLRLKRKVSSP.

Glu-91 serves as the catalytic Proton acceptor. The Radical SAM core domain maps to 97-326 (HPGRITACIS…AEIRQEKGSD (230 aa)). Cys-104 and Cys-331 are disulfide-bonded. The [4Fe-4S] cluster site is built by Cys-111, Cys-115, and Cys-118. S-adenosyl-L-methionine is bound by residues 158-159 (GE), Ser-190, 213-215 (SLH), and Asn-289. Catalysis depends on Cys-331, which acts as the S-methylcysteine intermediate.

The protein belongs to the radical SAM superfamily. RlmN family. It depends on [4Fe-4S] cluster as a cofactor.

It is found in the cytoplasm. The catalysed reaction is adenosine(2503) in 23S rRNA + 2 reduced [2Fe-2S]-[ferredoxin] + 2 S-adenosyl-L-methionine = 2-methyladenosine(2503) in 23S rRNA + 5'-deoxyadenosine + L-methionine + 2 oxidized [2Fe-2S]-[ferredoxin] + S-adenosyl-L-homocysteine. It carries out the reaction adenosine(37) in tRNA + 2 reduced [2Fe-2S]-[ferredoxin] + 2 S-adenosyl-L-methionine = 2-methyladenosine(37) in tRNA + 5'-deoxyadenosine + L-methionine + 2 oxidized [2Fe-2S]-[ferredoxin] + S-adenosyl-L-homocysteine. Functionally, specifically methylates position 2 of adenine 2503 in 23S rRNA and position 2 of adenine 37 in tRNAs. The polypeptide is Probable dual-specificity RNA methyltransferase RlmN (Thermotoga neapolitana (strain ATCC 49049 / DSM 4359 / NBRC 107923 / NS-E)).